The primary structure comprises 154 residues: Myoglobin (154 aa).

The 147-residue stretch at 2–148 (GLSDGEWQLV…FRNDIAAKYK (147 aa)) folds into the Globin domain. At Ser-4 the chain carries Phosphoserine. Residue His-65 participates in nitrite binding. His-65 contributes to the O2 binding site. A Phosphothreonine modification is found at Thr-68. Position 94 (His-94) interacts with heme b.

The protein belongs to the globin family. Monomeric.

The protein localises to the cytoplasm. It localises to the sarcoplasm. It carries out the reaction Fe(III)-heme b-[protein] + nitric oxide + H2O = Fe(II)-heme b-[protein] + nitrite + 2 H(+). The catalysed reaction is H2O2 + AH2 = A + 2 H2O. Monomeric heme protein which primary function is to store oxygen and facilitate its diffusion within muscle tissues. Reversibly binds oxygen through a pentacoordinated heme iron and enables its timely and efficient release as needed during periods of heightened demand. Depending on the oxidative conditions of tissues and cells, and in addition to its ability to bind oxygen, it also has a nitrite reductase activity whereby it regulates the production of bioactive nitric oxide. Under stress conditions, like hypoxia and anoxia, it also protects cells against reactive oxygen species thanks to its pseudoperoxidase activity. The protein is Myoglobin (MB) of Meles meles (Eurasian badger).